Reading from the N-terminus, the 97-residue chain is Co-chaperonin GroES (97 aa).

It belongs to the GroES chaperonin family. Heptamer of 7 subunits arranged in a ring. Interacts with the chaperonin GroEL.

Its subcellular location is the cytoplasm. Together with the chaperonin GroEL, plays an essential role in assisting protein folding. The GroEL-GroES system forms a nano-cage that allows encapsulation of the non-native substrate proteins and provides a physical environment optimized to promote and accelerate protein folding. GroES binds to the apical surface of the GroEL ring, thereby capping the opening of the GroEL channel. The polypeptide is Co-chaperonin GroES (Klebsiella pneumoniae (strain 342)).